The primary structure comprises 336 residues: D-alanine--D-alanine ligase (336 aa).

Residues lysine 124–asparagine 330 enclose the ATP-grasp domain. Alanine 154–glutamate 209 contacts ATP. Aspartate 284, glutamate 297, and asparagine 299 together coordinate Mg(2+).

This sequence belongs to the D-alanine--D-alanine ligase family. Mg(2+) serves as cofactor. The cofactor is Mn(2+).

It localises to the cytoplasm. The enzyme catalyses 2 D-alanine + ATP = D-alanyl-D-alanine + ADP + phosphate + H(+). Its pathway is cell wall biogenesis; peptidoglycan biosynthesis. Functionally, cell wall formation. This is D-alanine--D-alanine ligase from Shewanella sp. (strain MR-4).